A 362-amino-acid chain; its full sequence is MASPIEVRLHMTYPDFTVRTDLTLPGSGITALFGPSGSGKTTCLRCIAGLEKAGQGFIRVHDEVWQDTEKGVFLAPHKRAIGYVFQEASLFPHLSVRANLEFGMKRIPRQQRNIQLPQATELLGIDHLLERSPDKLSGGERQRVGIARALLTSPRLMLLDEPLAALDARRKSEILPYLERLHRELDIPMLYVSHAQDEVARLADHLVLLEAGNVLASGPIRETLARLDLPLAMGGDAGVVIEGTVSAYDRNYQLLSVTLPDSTLCMRVAHAEMQIGTLLRVKVQARDVSLNLQPDDQSSILNRLPVTVMEEALADNSAHVLVKLDAGGTPLLARITRYSSDQLNLHRGQSLWAQIKAVAVLA.

The 235-residue stretch at 2–236 (ASPIEVRLHM…LDLPLAMGGD (235 aa)) folds into the ABC transporter domain. 34–41 (GPSGSGKT) serves as a coordination point for ATP. The Mop domain occupies 297–362 (QSSILNRLPV…AQIKAVAVLA (66 aa)).

The protein belongs to the ABC transporter superfamily. Molybdate importer (TC 3.A.1.8) family. As to quaternary structure, the complex is composed of two ATP-binding proteins (ModC), two transmembrane proteins (ModB) and a solute-binding protein (ModA).

It is found in the cell inner membrane. It catalyses the reaction molybdate(out) + ATP + H2O = molybdate(in) + ADP + phosphate + H(+). In terms of biological role, part of the ABC transporter complex ModABC involved in molybdenum import. Responsible for energy coupling to the transport system. This Pseudomonas savastanoi pv. phaseolicola (strain 1448A / Race 6) (Pseudomonas syringae pv. phaseolicola (strain 1448A / Race 6)) protein is Molybdenum import ATP-binding protein ModC.